The primary structure comprises 194 residues: ATP-dependent Clp protease proteolytic subunit (194 aa).

S97 (nucleophile) is an active-site residue. H122 is a catalytic residue.

The protein belongs to the peptidase S14 family. As to quaternary structure, fourteen ClpP subunits assemble into 2 heptameric rings which stack back to back to give a disk-like structure with a central cavity, resembling the structure of eukaryotic proteasomes.

The protein resides in the cytoplasm. The catalysed reaction is Hydrolysis of proteins to small peptides in the presence of ATP and magnesium. alpha-casein is the usual test substrate. In the absence of ATP, only oligopeptides shorter than five residues are hydrolyzed (such as succinyl-Leu-Tyr-|-NHMec, and Leu-Tyr-Leu-|-Tyr-Trp, in which cleavage of the -Tyr-|-Leu- and -Tyr-|-Trp bonds also occurs).. In terms of biological role, cleaves peptides in various proteins in a process that requires ATP hydrolysis. Has a chymotrypsin-like activity. Plays a major role in the degradation of misfolded proteins. The sequence is that of ATP-dependent Clp protease proteolytic subunit from Lactobacillus delbrueckii subsp. bulgaricus (strain ATCC BAA-365 / Lb-18).